Reading from the N-terminus, the 262-residue chain is Small ribosomal subunit protein eS4 (262 aa).

One can recognise an S4 RNA-binding domain in the interval 42–105; that stretch reads LPLVVFLRNR…NEHFRLVYDV (64 aa). A KOW domain is found at 178–211; it reads GRLVMVTGGRNLGRVGVIVHREKHEGGFDLVHIK.

This sequence belongs to the eukaryotic ribosomal protein eS4 family. In terms of assembly, component of the small ribosomal subunit. Mature ribosomes consist of a small (40S) and a large (60S) subunit. The 40S subunit contains about 32 different proteins and 1 molecule of RNA (18S). The 60S subunit contains 45 different proteins and 3 molecules of RNA (25S, 5.8S and 5S).

The protein resides in the cytoplasm. Component of the ribosome, a large ribonucleoprotein complex responsible for the synthesis of proteins in the cell. The small ribosomal subunit (SSU) binds messenger RNAs (mRNAs) and translates the encoded message by selecting cognate aminoacyl-transfer RNA (tRNA) molecules. The large subunit (LSU) contains the ribosomal catalytic site termed the peptidyl transferase center (PTC), which catalyzes the formation of peptide bonds, thereby polymerizing the amino acids delivered by tRNAs into a polypeptide chain. The nascent polypeptides leave the ribosome through a tunnel in the LSU and interact with protein factors that function in enzymatic processing, targeting, and the membrane insertion of nascent chains at the exit of the ribosomal tunnel. The polypeptide is Small ribosomal subunit protein eS4 (RPS42) (Candida albicans (strain SC5314 / ATCC MYA-2876) (Yeast)).